Here is a 180-residue protein sequence, read N- to C-terminus: Inosine/xanthosine triphosphatase (180 aa).

8–13 (TTNPAK) serves as a coordination point for substrate. Residues Asp38 and Glu68 each contribute to the Mg(2+) site. Substrate is bound at residue 68-69 (EA).

The protein belongs to the YjjX NTPase family. As to quaternary structure, homodimer. It depends on Mg(2+) as a cofactor. Mn(2+) is required as a cofactor.

It catalyses the reaction XTP + H2O = XDP + phosphate + H(+). The enzyme catalyses ITP + H2O = IDP + phosphate + H(+). Its function is as follows. Phosphatase that hydrolyzes non-canonical purine nucleotides such as XTP and ITP to their respective diphosphate derivatives. Probably excludes non-canonical purines from DNA/RNA precursor pool, thus preventing their incorporation into DNA/RNA and avoiding chromosomal lesions. This Yersinia pseudotuberculosis serotype IB (strain PB1/+) protein is Inosine/xanthosine triphosphatase.